Reading from the N-terminus, the 207-residue chain is Ras-related protein Rab-7a (207 aa).

T2 carries the N-acetylthreonine modification. Residues S17, G18, V19, G20, K21, T22, S23, S34, N35, Y37, and T40 each contribute to the GTP site. A Mg(2+)-binding site is contributed by T22. The Switch 1 signature appears at 28–41; sequence YVNKKFSNQYKATI. Mg(2+)-binding residues include T40 and D63. Residue G66 coordinates GTP. Positions 67 to 82 match the Switch 2 motif; the sequence is QERFQSLGVAFYRGAD. S72 carries the post-translational modification Phosphoserine. Residues N125, K126, D128, A156, and K157 each contribute to the GTP site. Residues K191 and K194 each participate in a glycyl lysine isopeptide (Lys-Gly) (interchain with G-Cter in ubiquitin) cross-link. S-geranylgeranyl cysteine attachment occurs at residues C205 and C207. C207 is subject to Cysteine methyl ester.

The protein belongs to the small GTPase superfamily. Rab family. In terms of assembly, interacts with NTRK1/TRKA. Interacts with RILP. Interacts with PSMA7. Interacts with RNF115. Interacts with FYCO1. Interacts with the PIK3C3/VPS34-PIK3R4 complex. The GTP-bound form interacts with OSBPL1A. The GTP-bound form interacts with RAC1. Interacts with CLN3. Interacts with CHM, the substrate-binding subunit of the Rab geranylgeranyltransferase complex. Interacts with C9orf72. Does not interact with HPS4 and the BLOC-3 complex (heterodimer of HPS1 and HPS4). Interacts with CLN5. Interacts with PLEKHM1 (via N- and C-terminus). Interacts with PRPH; the interaction is direct. Interacts with VPS13A. The GDP-bound form interacts with RIMOC1. Interacts with the MON1A-CCZ1B complex and this interaction is enhanced in the presence of RIMOC1. Interacts with VPS39 and VPS41. Forms a ternary complex with LAMP2 and RUFY4; the interaction with LAMP2 is mediated by RUFY4 (via RUN and coiled coil domains). It depends on Mg(2+) as a cofactor. Post-translationally, deubiquitination at Lys-191 and Lys-194 by USP32. Phosphorylated at Ser-72 by LRRK1; phosphorylation is dependent on protein kinase C (PKC) activation of LRRK1. In terms of processing, prenylated. Prenylation is required for association with cellular membranes.

The protein resides in the cytoplasmic vesicle. Its subcellular location is the phagosome membrane. The protein localises to the late endosome membrane. It is found in the lysosome membrane. It localises to the melanosome membrane. The protein resides in the autophagosome membrane. Its subcellular location is the lipid droplet. The protein localises to the endosome membrane. It is found in the mitochondrion membrane. The enzyme catalyses GTP + H2O = GDP + phosphate + H(+). Its activity is regulated as follows. Regulated by guanine nucleotide exchange factors (GEFs) which promote the exchange of bound GDP for free GTP. Regulated by GTPase activating proteins (GAPs) which increase the GTP hydrolysis activity. Inhibited by GDP dissociation inhibitors (GDIs). In terms of biological role, the small GTPases Rab are key regulators of intracellular membrane trafficking, from the formation of transport vesicles to their fusion with membranes. Rabs cycle between an inactive GDP-bound form and an active GTP-bound form that is able to recruit to membranes different sets of downstream effectors directly responsible for vesicle formation, movement, tethering and fusion. In its active state, RAB7A binds to a variety of effector proteins playing a key role in the regulation of endo-lysosomal trafficking. Governs early-to-late endosomal maturation, microtubule minus-end as well as plus-end directed endosomal migration and positioning, and endosome-lysosome transport through different protein-protein interaction cascades. Also plays a central role in growth-factor-mediated cell signaling, nutrient-transporter-mediated nutrient uptake, neurotrophin transport in the axons of neurons and lipid metabolism. Also involved in regulation of some specialized endosomal membrane trafficking, such as maturation of melanosomes, pathogen-induced phagosomes (or vacuoles) and autophagosomes. Plays a role in the maturation and acidification of phagosomes that engulf pathogens, such as S.aureus and Mycobacteria. Plays a role in the fusion of phagosomes with lysosomes. In concert with RAC1, plays a role in regulating the formation of RBs (ruffled borders) in osteoclasts. Controls the endosomal trafficking and neurite outgrowth signaling of NTRK1/TRKA. Regulates the endocytic trafficking of the EGF-EGFR complex by regulating its lysosomal degradation. Involved in the ADRB2-stimulated lipolysis through lipophagy, a cytosolic lipase-independent autophagic pathway. Required for the exosomal release of SDCBP, CD63 and syndecan. Required for vesicular trafficking and cell surface expression of ACE2. May play a role in PRPH neuronal intermediate filament assembly. The protein is Ras-related protein Rab-7a (RAB7A) of Bos taurus (Bovine).